We begin with the raw amino-acid sequence, 132 residues long: Small ribosomal subunit protein uS8 (132 aa).

Belongs to the universal ribosomal protein uS8 family. Part of the 30S ribosomal subunit. Contacts proteins S5 and S12.

One of the primary rRNA binding proteins, it binds directly to 16S rRNA central domain where it helps coordinate assembly of the platform of the 30S subunit. In Oceanobacillus iheyensis (strain DSM 14371 / CIP 107618 / JCM 11309 / KCTC 3954 / HTE831), this protein is Small ribosomal subunit protein uS8.